The chain runs to 556 residues: Urocanate hydratase (556 aa).

Residues 52 to 53, Q130, 176 to 178, E196, R201, 242 to 243, 263 to 267, 273 to 274, and Y322 each bind NAD(+); these read GG, GMG, NA, QTSAH, and YL. Residue C410 is part of the active site. Residue G492 participates in NAD(+) binding.

It belongs to the urocanase family. It depends on NAD(+) as a cofactor.

The protein resides in the cytoplasm. The enzyme catalyses 4-imidazolone-5-propanoate = trans-urocanate + H2O. Its pathway is amino-acid degradation; L-histidine degradation into L-glutamate; N-formimidoyl-L-glutamate from L-histidine: step 2/3. Functionally, catalyzes the conversion of urocanate to 4-imidazolone-5-propionate. This Shewanella sp. (strain ANA-3) protein is Urocanate hydratase.